The sequence spans 621 residues: Chaperone protein HscA homolog (621 aa).

It belongs to the heat shock protein 70 family.

In terms of biological role, chaperone involved in the maturation of iron-sulfur cluster-containing proteins. Has a low intrinsic ATPase activity which is markedly stimulated by HscB. This is Chaperone protein HscA homolog from Acidithiobacillus ferrooxidans (strain ATCC 23270 / DSM 14882 / CIP 104768 / NCIMB 8455) (Ferrobacillus ferrooxidans (strain ATCC 23270)).